Here is a 582-residue protein sequence, read N- to C-terminus: Phosphoglucomutase, cytoplasmic (582 aa).

The alpha-D-glucose 1,6-bisphosphate site is built by arginine 25 and serine 124. Serine 124 serves as the catalytic Phosphoserine intermediate. Residues serine 124, aspartate 299, aspartate 301, and aspartate 303 each coordinate Mg(2+). Residue serine 124 is modified to Phosphoserine. Residues aspartate 303, arginine 304, threonine 367, glutamate 386, serine 388, and lysine 399 each coordinate alpha-D-glucose 1,6-bisphosphate.

This sequence belongs to the phosphohexose mutase family. In terms of assembly, monomer. Mg(2+) serves as cofactor.

It is found in the cytoplasm. The catalysed reaction is alpha-D-glucose 1-phosphate = alpha-D-glucose 6-phosphate. It catalyses the reaction O-phospho-L-seryl-[protein] + alpha-D-glucose 1-phosphate = alpha-D-glucose 1,6-bisphosphate + L-seryl-[protein]. The enzyme catalyses alpha-D-glucose 1,6-bisphosphate + L-seryl-[protein] = O-phospho-L-seryl-[protein] + alpha-D-glucose 6-phosphate. Catalyzes the reversible isomerization of alpha-D-glucose 1-phosphate to alpha-D-glucose 6-phosphate. The mechanism proceeds via the intermediate compound alpha-D-glucose 1,6-bisphosphate. This enzyme participates in both the breakdown and synthesis of glucose. The chain is Phosphoglucomutase, cytoplasmic (PGM1) from Populus tremula (European aspen).